The chain runs to 360 residues: Protein Wnt-2 (360 aa).

Positions 1 to 25 are cleaved as a signal peptide; that stretch reads MNAPLGGIWLWLPLLLTWLSPEVSS. 11 disulfide bridges follow: Cys-76–Cys-87, Cys-127–Cys-135, Cys-137–Cys-157, Cys-206–Cys-220, Cys-208–Cys-215, Cys-278–Cys-309, Cys-294–Cys-304, Cys-308–Cys-348, Cys-324–Cys-339, Cys-326–Cys-336, and Cys-331–Cys-332. Ser-212 carries O-palmitoleoyl serine; by PORCN lipidation. Residue Asn-295 is glycosylated (N-linked (GlcNAc...) asparagine).

Belongs to the Wnt family. In terms of processing, palmitoleoylation is required for efficient binding to frizzled receptors. Depalmitoleoylation leads to Wnt signaling pathway inhibition.

The protein localises to the secreted. Its subcellular location is the extracellular space. It is found in the extracellular matrix. Ligand for members of the frizzled family of seven transmembrane receptors. Probable developmental protein. May be a signaling molecule which affects the development of discrete regions of tissues. Is likely to signal over only few cell diameters. The polypeptide is Protein Wnt-2 (WNT2) (Carollia perspicillata (Seba's short-tailed bat)).